The chain runs to 574 residues: Putative diflavin flavoprotein A 3 (574 aa).

The segment at 43–236 (QNGTTYNSFL…PSVKMIATGH (194 aa)) is zinc metallo-hydrolase. Residues His-92, Glu-94, Asp-96, His-159, Asp-178, and His-236 each coordinate Fe cation. The Flavodoxin-like domain occupies 265 to 409 (IGVFYVSEYG…DLGQWVTRDR (145 aa)). The interval 410 to 574 (SIKAMKSLGA…VHHRKVGNHY (165 aa)) is flavodoxin-reductase-like.

It in the N-terminal section; belongs to the zinc metallo-hydrolase group 3 family. This sequence in the C-terminal section; belongs to the flavodoxin reductase family. Requires Fe cation as cofactor.

In terms of biological role, mediates electron transfer from NADH to oxygen, reducing it to water. This modular protein has 3 redox cofactors, in other organisms the same activity requires 2 or 3 proteins. The sequence is that of Putative diflavin flavoprotein A 3 (dfa3) from Nostoc sp. (strain PCC 7120 / SAG 25.82 / UTEX 2576).